Reading from the N-terminus, the 169-residue chain is Small ribosomal subunit protein uS5 (169 aa).

Positions L14–V77 constitute an S5 DRBM domain.

It belongs to the universal ribosomal protein uS5 family. Part of the 30S ribosomal subunit. Contacts proteins S4 and S8.

Its function is as follows. With S4 and S12 plays an important role in translational accuracy. Functionally, located at the back of the 30S subunit body where it stabilizes the conformation of the head with respect to the body. The protein is Small ribosomal subunit protein uS5 of Clostridioides difficile (strain 630) (Peptoclostridium difficile).